Reading from the N-terminus, the 181-residue chain is uncharacterized protein (181 aa).

Residues 162-181 (QARGPAGTRTPQRRCSSHEA) are disordered.

This is an uncharacterized protein from Homo sapiens (Human).